A 364-amino-acid chain; its full sequence is tRNA 2-selenouridine synthase (364 aa).

One can recognise a Rhodanese domain in the interval 14 to 137; sequence LIADTPIIDV…LRQTAIQATI (124 aa). The active-site S-selanylcysteine intermediate is the cysteine 97.

The protein belongs to the SelU family. Monomer.

The catalysed reaction is 5-methylaminomethyl-2-thiouridine(34) in tRNA + selenophosphate + (2E)-geranyl diphosphate + H2O + H(+) = 5-methylaminomethyl-2-selenouridine(34) in tRNA + (2E)-thiogeraniol + phosphate + diphosphate. It catalyses the reaction 5-methylaminomethyl-2-thiouridine(34) in tRNA + (2E)-geranyl diphosphate = 5-methylaminomethyl-S-(2E)-geranyl-thiouridine(34) in tRNA + diphosphate. It carries out the reaction 5-methylaminomethyl-S-(2E)-geranyl-thiouridine(34) in tRNA + selenophosphate + H(+) = 5-methylaminomethyl-2-(Se-phospho)selenouridine(34) in tRNA + (2E)-thiogeraniol. The enzyme catalyses 5-methylaminomethyl-2-(Se-phospho)selenouridine(34) in tRNA + H2O = 5-methylaminomethyl-2-selenouridine(34) in tRNA + phosphate. Functionally, involved in the post-transcriptional modification of the uridine at the wobble position (U34) of tRNA(Lys), tRNA(Glu) and tRNA(Gln). Catalyzes the conversion of 2-thiouridine (S2U-RNA) to 2-selenouridine (Se2U-RNA). Acts in a two-step process involving geranylation of 2-thiouridine (S2U) to S-geranyl-2-thiouridine (geS2U) and subsequent selenation of the latter derivative to 2-selenouridine (Se2U) in the tRNA chain. This is tRNA 2-selenouridine synthase from Escherichia coli (strain SMS-3-5 / SECEC).